We begin with the raw amino-acid sequence, 600 residues long: MAFASPPASPPDEDGQARAPRYPGEDTTPTSRQEIWGWYAYGIAAEVFAVCGVGSFLPLTLEQLARERGFLQSSHLPCVGPDSPSAPKESSPAMFRRDDTNEQCVVGLMGLEINTASFAMYTFSLAVLVQALTLISFSALADYENNRKTLLVTFGFIGSATSMLFVFIAPPVFVLGALLVVVGVVCLGSSFVVLNSFLPVLVASDPSIQNSNKESAAELHRLDPEAEYVHARTSFDGDEPTHRPPTGLGLGGATGTSSPELQLSTKISSKGVGLGYCAAVFVQILSILLLFTLSKTSISKASGTLPLRFVLLLVGIWWFSFTMVSRRWLRNRPGPPLESTSTGASSHQPRWRIWLHLVAFAWKSLWKTVKIALKLREVIVFLVAWFLLSDAMATVSGTAILFARTELKMSTTMVALLSITATLSGMAGAFLWPIVSRYFGLKSNHTIMVCIALFELIPLYGMLAYIPLFKKWGVIGLQQPWEIYPLAIVHGVVSGGLSSYCRSFFGLLIPPGMEAAFYALYAATDKGSSFIGPAIVGVLIDATGQVRSGFFFIAVLIVLPIPLVWMVDAEKGRKEGLKISEDVVRGGEGEDEEVEGLLAR.

The disordered stretch occupies residues Met-1–Thr-30. 4 helical membrane-spanning segments follow: residues Tyr-41–Leu-61, Ser-117–Phe-137, Thr-149–Ile-168, and Cys-186–Pro-206. The disordered stretch occupies residues Ser-234–Ser-257. 4 helical membrane passes run Gly-271–Phe-291, Thr-304–Val-324, Val-378–Thr-398, and Val-414–Ile-434. Asn-444 is a glycosylation site (N-linked (GlcNAc...) asparagine). The next 4 helical transmembrane spans lie at Val-449–Phe-469, Tyr-484–Gly-506, Lys-526–Val-546, and Gly-549–Ala-569.

Belongs to the ATG22 family.

It is found in the vacuole membrane. In terms of biological role, vacuolar effluxer which mediate the efflux of amino acids resulting from autophagic degradation. The release of autophagic amino acids allows the maintenance of protein synthesis and viability during nitrogen starvation. This chain is Autophagy-related protein 22-2 (atg22-2), found in Aspergillus niger (strain ATCC MYA-4892 / CBS 513.88 / FGSC A1513).